A 449-amino-acid chain; its full sequence is Glucose-6-phosphate isomerase (449 aa).

The active-site Proton donor is glutamate 291. Active-site residues include histidine 312 and lysine 426.

It belongs to the GPI family.

Its subcellular location is the cytoplasm. It carries out the reaction alpha-D-glucose 6-phosphate = beta-D-fructose 6-phosphate. It functions in the pathway carbohydrate biosynthesis; gluconeogenesis. Its pathway is carbohydrate degradation; glycolysis; D-glyceraldehyde 3-phosphate and glycerone phosphate from D-glucose: step 2/4. Its function is as follows. Catalyzes the reversible isomerization of glucose-6-phosphate to fructose-6-phosphate. The chain is Glucose-6-phosphate isomerase from Streptococcus equi subsp. zooepidemicus (strain MGCS10565).